The primary structure comprises 78 residues: uncharacterized protein (78 aa).

A disordered region spans residues 1–78 (MSSNSNTDHS…VDLEGPKDEQ (78 aa)). Basic and acidic residues-rich tracts occupy residues 10–33 (STGDNRSKSEKQTDLRNALRETES) and 63–78 (LNLKEPVDLEGPKDEQ).

This is an uncharacterized protein from Schizosaccharomyces pombe (strain 972 / ATCC 24843) (Fission yeast).